The chain runs to 309 residues: tRNA pseudouridine synthase B (309 aa).

Asp45 serves as the catalytic Nucleophile.

The protein belongs to the pseudouridine synthase TruB family. Type 1 subfamily.

It catalyses the reaction uridine(55) in tRNA = pseudouridine(55) in tRNA. In terms of biological role, responsible for synthesis of pseudouridine from uracil-55 in the psi GC loop of transfer RNAs. The sequence is that of tRNA pseudouridine synthase B from Oleidesulfovibrio alaskensis (strain ATCC BAA-1058 / DSM 17464 / G20) (Desulfovibrio alaskensis).